The primary structure comprises 274 residues: Formamidopyrimidine-DNA glycosylase (274 aa).

Catalysis depends on P2, which acts as the Schiff-base intermediate with DNA. E3 (proton donor) is an active-site residue. K58 serves as the catalytic Proton donor; for beta-elimination activity. DNA-binding residues include H91, R110, and K152. The FPG-type zinc finger occupies 237 to 271 (KVYGRKNLPCLVCENKIETVVIAGRHSAFCPHCQP). The active-site Proton donor; for delta-elimination activity is the R261.

Belongs to the FPG family. In terms of assembly, monomer. The cofactor is Zn(2+).

It catalyses the reaction Hydrolysis of DNA containing ring-opened 7-methylguanine residues, releasing 2,6-diamino-4-hydroxy-5-(N-methyl)formamidopyrimidine.. The enzyme catalyses 2'-deoxyribonucleotide-(2'-deoxyribose 5'-phosphate)-2'-deoxyribonucleotide-DNA = a 3'-end 2'-deoxyribonucleotide-(2,3-dehydro-2,3-deoxyribose 5'-phosphate)-DNA + a 5'-end 5'-phospho-2'-deoxyribonucleoside-DNA + H(+). In terms of biological role, involved in base excision repair of DNA damaged by oxidation or by mutagenic agents. Acts as a DNA glycosylase that recognizes and removes damaged bases. Has a preference for oxidized purines, such as 7,8-dihydro-8-oxoguanine (8-oxoG). Has AP (apurinic/apyrimidinic) lyase activity and introduces nicks in the DNA strand. Cleaves the DNA backbone by beta-delta elimination to generate a single-strand break at the site of the removed base with both 3'- and 5'-phosphates. This chain is Formamidopyrimidine-DNA glycosylase, found in Legionella pneumophila (strain Lens).